Consider the following 424-residue polypeptide: MTAITDIIAREILDSRGNPTVEVDVYLEDGSMGRAAVPSGASTGAHEAVELRDGGKRYLGKGVEKAVEAANTEIFDAIGGIDAENQIQIDNIMIELDGTPNKSRLGANAILGVSLAVAKAAAQASGLPLYRYVGGASASLLPVPMMNIINGGAHADNPIDFQEFMILPVGADTIAEAVRMGSEVFHTLRKELAAQGHNTNVGDEGGFAPGLKSASEALDFIVKSVEKAGYKPGEDIYLGLDCASTEFFKDGKYVLEGEGRTLESGAMAEYLAELAAKYPIISIEDGMAEDDWDGWKALTDLAGKKIQLVGDDLFVTNSARLRDGIRMGVANSILVKVNQIGSLTETLDAVNTAHKAAYTAVMSHRSGETEDSTIADLAVATNCGQIKTGSLSRSDRLAKYNQLIRIEEGLGPQAQYAGRSIIRG.

Glutamine 162 contributes to the (2R)-2-phosphoglycerate binding site. Residue glutamate 204 is the Proton donor of the active site. Mg(2+) contacts are provided by aspartate 241, glutamate 284, and aspartate 311. (2R)-2-phosphoglycerate-binding residues include lysine 336, arginine 365, serine 366, and lysine 387. The Proton acceptor role is filled by lysine 336.

The protein belongs to the enolase family. It depends on Mg(2+) as a cofactor.

The protein localises to the cytoplasm. Its subcellular location is the secreted. It is found in the cell surface. It catalyses the reaction (2R)-2-phosphoglycerate = phosphoenolpyruvate + H2O. The protein operates within carbohydrate degradation; glycolysis; pyruvate from D-glyceraldehyde 3-phosphate: step 4/5. Functionally, catalyzes the reversible conversion of 2-phosphoglycerate (2-PG) into phosphoenolpyruvate (PEP). It is essential for the degradation of carbohydrates via glycolysis. This Rhizobium etli (strain ATCC 51251 / DSM 11541 / JCM 21823 / NBRC 15573 / CFN 42) protein is Enolase.